The sequence spans 576 residues: Aspartate--tRNA ligase (576 aa).

An L-aspartate-binding site is contributed by Glu170. The tract at residues 194–197 is aspartate; sequence QLFK. Position 216 (Arg216) interacts with L-aspartate. ATP-binding positions include 216–218 and Gln225; that span reads RDE. Position 438 (His438) interacts with L-aspartate. Glu471 contributes to the ATP binding site. Residue Arg478 coordinates L-aspartate. Residue 523–526 participates in ATP binding; it reads GLDR.

It belongs to the class-II aminoacyl-tRNA synthetase family. Type 1 subfamily. Homodimer.

The protein resides in the cytoplasm. It catalyses the reaction tRNA(Asp) + L-aspartate + ATP = L-aspartyl-tRNA(Asp) + AMP + diphosphate. Functionally, catalyzes the attachment of L-aspartate to tRNA(Asp) in a two-step reaction: L-aspartate is first activated by ATP to form Asp-AMP and then transferred to the acceptor end of tRNA(Asp). This Fervidobacterium nodosum (strain ATCC 35602 / DSM 5306 / Rt17-B1) protein is Aspartate--tRNA ligase.